The following is a 640-amino-acid chain: Dextranase (640 aa).

An N-terminal signal peptide occupies residues 1–32 (MPGTGLGRLAKRMTAAAAVFFISTSAVLPAQA). Positions 33–49 (ATAPAAAPPGVPAALKA) are excised as a propeptide. Positions 248-269 (EQKERLVPTEESGSIHYPEPGE) are disordered.

It belongs to the glycosyl hydrolase 49 family.

It localises to the secreted. The catalysed reaction is Endohydrolysis of (1-&gt;6)-alpha-D-glucosidic linkages in dextran.. In terms of biological role, efficiently decomposes water-insoluble glucan as well as dextran. This Arthrobacter sp. (strain CB-8) protein is Dextranase.